Consider the following 469-residue polypeptide: ATP-dependent protease ATPase subunit HslU (469 aa).

ATP contacts are provided by residues Ile24, 66–71 (GVGKTE), Asp282, Glu347, and Arg419.

This sequence belongs to the ClpX chaperone family. HslU subfamily. A double ring-shaped homohexamer of HslV is capped on each side by a ring-shaped HslU homohexamer. The assembly of the HslU/HslV complex is dependent on binding of ATP.

It localises to the cytoplasm. In terms of biological role, ATPase subunit of a proteasome-like degradation complex; this subunit has chaperone activity. The binding of ATP and its subsequent hydrolysis by HslU are essential for unfolding of protein substrates subsequently hydrolyzed by HslV. HslU recognizes the N-terminal part of its protein substrates and unfolds these before they are guided to HslV for hydrolysis. The sequence is that of ATP-dependent protease ATPase subunit HslU from Listeria monocytogenes serotype 4a (strain HCC23).